We begin with the raw amino-acid sequence, 230 residues long: Pyridoxal phosphate homeostasis protein (230 aa).

At lysine 36 the chain carries N6-(pyridoxal phosphate)lysine.

It belongs to the pyridoxal phosphate-binding protein YggS/PROSC family.

Functionally, perhaps involved in proline biosynthesis. In terms of biological role, pyridoxal 5'-phosphate (PLP)-binding protein, which is involved in PLP homeostasis. The chain is Pyridoxal phosphate homeostasis protein from Pseudomonas aeruginosa (strain ATCC 15692 / DSM 22644 / CIP 104116 / JCM 14847 / LMG 12228 / 1C / PRS 101 / PAO1).